The sequence spans 255 residues: Type III pantothenate kinase (255 aa).

6–13 (DIGNTNTV) contacts ATP. Substrate contacts are provided by residues Tyr100 and 107–110 (GADR). Asp109 functions as the Proton acceptor in the catalytic mechanism. Asp129 lines the K(+) pocket. An ATP-binding site is contributed by Thr132. Thr185 is a binding site for substrate.

Belongs to the type III pantothenate kinase family. In terms of assembly, homodimer. It depends on NH4(+) as a cofactor. Requires K(+) as cofactor.

Its subcellular location is the cytoplasm. The catalysed reaction is (R)-pantothenate + ATP = (R)-4'-phosphopantothenate + ADP + H(+). It functions in the pathway cofactor biosynthesis; coenzyme A biosynthesis; CoA from (R)-pantothenate: step 1/5. In terms of biological role, catalyzes the phosphorylation of pantothenate (Pan), the first step in CoA biosynthesis. In Desulfosudis oleivorans (strain DSM 6200 / JCM 39069 / Hxd3) (Desulfococcus oleovorans), this protein is Type III pantothenate kinase.